Reading from the N-terminus, the 132-residue chain is MGRDTIANIITSIRNADMDKKGTVRIASTNITENIVKILLREGFIENVRKHRESNKYFLVSTLRHRRSRKGPYRTILKRISRPGLRIYSNYQRIPRILGGMGIVILSTSRGIMTDREARLEGIGGEILCYIW.

The protein belongs to the universal ribosomal protein uS8 family. As to quaternary structure, part of the 30S ribosomal subunit.

The protein localises to the plastid. The protein resides in the chloroplast. One of the primary rRNA binding proteins, it binds directly to 16S rRNA central domain where it helps coordinate assembly of the platform of the 30S subunit. In Buxus microphylla (Littleleaf boxwood), this protein is Small ribosomal subunit protein uS8c (rps8).